Here is a 435-residue protein sequence, read N- to C-terminus: Monodehydroascorbate reductase 4, cytosolic (435 aa).

FAD is bound by residues 14 to 17 (GGVA), Glu41, Arg48, Lys53, Ile96, and 147 to 148 (RD). Residues 172–178 (GGYIGLE), Glu196, Arg202, and Gly261 contribute to the NAD(+) site. NADP(+) is bound at residue 174 to 178 (YIGLE). The NADP(+) site is built by Arg202 and Gly261. An FAD-binding site is contributed by Asp298. 314 to 315 (EH) is a binding site for NAD(+). 314-315 (EH) contributes to the NADP(+) binding site. Val316 contributes to the FAD binding site. Arg320 contributes to the L-ascorbate binding site. Tyr349 is an FAD binding site. Tyr349 provides a ligand contact to NAD(+). Tyr349 contacts NADP(+). Arg351 contributes to the L-ascorbate binding site.

It belongs to the FAD-dependent oxidoreductase family. Requires FAD as cofactor. As to expression, expressed in anthers.

It is found in the cytoplasm. The enzyme catalyses 2 monodehydro-L-ascorbate radical + NADH + H(+) = 2 L-ascorbate + NAD(+). Its function is as follows. Catalyzes the conversion of monodehydroascorbate to ascorbate, oxidizing NADH in the process. Ascorbate is a major antioxidant against reactive oxygen species (ROS) and nitric oxide (NO). In Oryza sativa subsp. japonica (Rice), this protein is Monodehydroascorbate reductase 4, cytosolic.